The primary structure comprises 470 residues: Protein ASPARTIC PROTEASE IN GUARD CELL 2 (470 aa).

The N-terminal stretch at 1-19 (MLLPLFFFFLHLHLHLSSS) is a signal peptide. Residues 131–466 (YFVRIGVGSP…DGANGFVGFG (336 aa)) enclose the Peptidase A1 domain. The active site involves Asp-149. 6 cysteine pairs are disulfide-bonded: Cys-159-Cys-162, Cys-165-Cys-239, Cys-186-Cys-204, Cys-191-Cys-199, Cys-278-Cys-470, and Cys-389-Cys-431. Asp-350 is an active-site residue.

The protein belongs to the peptidase A1 family.

In terms of biological role, aspartic protease that may be involved in drought avoidance through abscisic acid signaling. In Arabidopsis thaliana (Mouse-ear cress), this protein is Protein ASPARTIC PROTEASE IN GUARD CELL 2 (ASPG2).